Here is a 154-residue protein sequence, read N- to C-terminus: Myoglobin (154 aa).

One can recognise a Globin domain in the interval 2–148; that stretch reads GLSDGEWQLV…FRKDMASNYK (147 aa). Ser4 carries the post-translational modification Phosphoserine. His65 lines the nitrite pocket. His65 is an O2 binding site. Thr68 bears the Phosphothreonine mark. His94 contributes to the heme b binding site.

Belongs to the globin family. As to quaternary structure, monomeric.

The protein localises to the cytoplasm. Its subcellular location is the sarcoplasm. It catalyses the reaction Fe(III)-heme b-[protein] + nitric oxide + H2O = Fe(II)-heme b-[protein] + nitrite + 2 H(+). The enzyme catalyses H2O2 + AH2 = A + 2 H2O. Monomeric heme protein which primary function is to store oxygen and facilitate its diffusion within muscle tissues. Reversibly binds oxygen through a pentacoordinated heme iron and enables its timely and efficient release as needed during periods of heightened demand. Depending on the oxidative conditions of tissues and cells, and in addition to its ability to bind oxygen, it also has a nitrite reductase activity whereby it regulates the production of bioactive nitric oxide. Under stress conditions, like hypoxia and anoxia, it also protects cells against reactive oxygen species thanks to its pseudoperoxidase activity. The chain is Myoglobin (MB) from Pongo pygmaeus (Bornean orangutan).